A 343-amino-acid chain; its full sequence is Aspartate carbamoyltransferase catalytic subunit (343 aa).

Residues R91 and T92 each coordinate carbamoyl phosphate. L-aspartate is bound at residue K119. The carbamoyl phosphate site is built by R141, H171, and Q174. Positions 204 and 259 each coordinate L-aspartate. G300 and P301 together coordinate carbamoyl phosphate.

Belongs to the aspartate/ornithine carbamoyltransferase superfamily. ATCase family. In terms of assembly, heterododecamer (2C3:3R2) of six catalytic PyrB chains organized as two trimers (C3), and six regulatory PyrI chains organized as three dimers (R2).

It carries out the reaction carbamoyl phosphate + L-aspartate = N-carbamoyl-L-aspartate + phosphate + H(+). The protein operates within pyrimidine metabolism; UMP biosynthesis via de novo pathway; (S)-dihydroorotate from bicarbonate: step 2/3. In terms of biological role, catalyzes the condensation of carbamoyl phosphate and aspartate to form carbamoyl aspartate and inorganic phosphate, the committed step in the de novo pyrimidine nucleotide biosynthesis pathway. The chain is Aspartate carbamoyltransferase catalytic subunit from Burkholderia thailandensis (strain ATCC 700388 / DSM 13276 / CCUG 48851 / CIP 106301 / E264).